The primary structure comprises 238 residues: Triosephosphate isomerase (238 aa).

Substrate is bound at residue 7-9 (NFK). H91 functions as the Electrophile in the catalytic mechanism. Residue E158 is the Proton acceptor of the active site. Positions 164 and 200 each coordinate substrate.

It belongs to the triosephosphate isomerase family. Homodimer.

The protein resides in the cytoplasm. The catalysed reaction is D-glyceraldehyde 3-phosphate = dihydroxyacetone phosphate. It participates in carbohydrate biosynthesis; gluconeogenesis. Its pathway is carbohydrate degradation; glycolysis; D-glyceraldehyde 3-phosphate from glycerone phosphate: step 1/1. Involved in the gluconeogenesis. Catalyzes stereospecifically the conversion of dihydroxyacetone phosphate (DHAP) to D-glyceraldehyde-3-phosphate (G3P). This chain is Triosephosphate isomerase, found in Ureaplasma parvum serovar 3 (strain ATCC 27815 / 27 / NCTC 11736).